The primary structure comprises 495 residues: Cytoplasmic alpha-amylase (495 aa).

2 residues coordinate Ca(2+): asparagine 104 and aspartate 198. Catalysis depends on aspartate 235, which acts as the Nucleophile. Residue histidine 239 coordinates Ca(2+). Glutamate 265 serves as the catalytic Proton donor.

This sequence belongs to the glycosyl hydrolase 13 family. In terms of assembly, monomer. Ca(2+) serves as cofactor.

The protein localises to the cytoplasm. It catalyses the reaction Endohydrolysis of (1-&gt;4)-alpha-D-glucosidic linkages in polysaccharides containing three or more (1-&gt;4)-alpha-linked D-glucose units.. The protein is Cytoplasmic alpha-amylase (amyA) of Escherichia coli (strain K12).